The primary structure comprises 119 residues: Large ribosomal subunit protein bL20 (119 aa).

It belongs to the bacterial ribosomal protein bL20 family.

Its function is as follows. Binds directly to 23S ribosomal RNA and is necessary for the in vitro assembly process of the 50S ribosomal subunit. It is not involved in the protein synthesizing functions of that subunit. The sequence is that of Large ribosomal subunit protein bL20 from Verminephrobacter eiseniae (strain EF01-2).